The chain runs to 96 residues: Aspartyl/glutamyl-tRNA(Asn/Gln) amidotransferase subunit C (96 aa).

Belongs to the GatC family. Heterotrimer of A, B and C subunits.

The catalysed reaction is L-glutamyl-tRNA(Gln) + L-glutamine + ATP + H2O = L-glutaminyl-tRNA(Gln) + L-glutamate + ADP + phosphate + H(+). It carries out the reaction L-aspartyl-tRNA(Asn) + L-glutamine + ATP + H2O = L-asparaginyl-tRNA(Asn) + L-glutamate + ADP + phosphate + 2 H(+). In terms of biological role, allows the formation of correctly charged Asn-tRNA(Asn) or Gln-tRNA(Gln) through the transamidation of misacylated Asp-tRNA(Asn) or Glu-tRNA(Gln) in organisms which lack either or both of asparaginyl-tRNA or glutaminyl-tRNA synthetases. The reaction takes place in the presence of glutamine and ATP through an activated phospho-Asp-tRNA(Asn) or phospho-Glu-tRNA(Gln). This chain is Aspartyl/glutamyl-tRNA(Asn/Gln) amidotransferase subunit C, found in Bacillus velezensis (strain DSM 23117 / BGSC 10A6 / LMG 26770 / FZB42) (Bacillus amyloliquefaciens subsp. plantarum).